We begin with the raw amino-acid sequence, 528 residues long: Peptide chain release factor 3 (528 aa).

Positions 11 to 279 (SRRRTFAIIS…GLVDWAPSPQ (269 aa)) constitute a tr-type G domain. GTP is bound by residues 20-27 (SHPDAGKT), 88-92 (DTPGH), and 142-145 (NKLD).

The protein belongs to the TRAFAC class translation factor GTPase superfamily. Classic translation factor GTPase family. PrfC subfamily.

Its subcellular location is the cytoplasm. Functionally, increases the formation of ribosomal termination complexes and stimulates activities of RF-1 and RF-2. It binds guanine nucleotides and has strong preference for UGA stop codons. It may interact directly with the ribosome. The stimulation of RF-1 and RF-2 is significantly reduced by GTP and GDP, but not by GMP. The protein is Peptide chain release factor 3 of Pseudoalteromonas atlantica (strain T6c / ATCC BAA-1087).